Reading from the N-terminus, the 360-residue chain is (+)-6a-hydroxymaackiain 3-O-methyltransferase 2 (360 aa).

Residues 202-205 (VAGG), aspartate 226, 226-227 (DQ), 246-247 (DM), and lysine 260 each bind S-adenosyl-L-methionine. The Proton acceptor role is filled by histidine 264.

Belongs to the class I-like SAM-binding methyltransferase superfamily. Cation-independent O-methyltransferase family. COMT subfamily.

It catalyses the reaction (+)-6a-hydroxymaackiain + S-adenosyl-L-methionine = (+)-pisatin + S-adenosyl-L-homocysteine + H(+). 3-O-methyltransferase involved in the phytoalexin pisatin biosynthesis. Can use (+)-6a-hydroxymaackiain, (+)-maackiain and with a lower activity (+)-medicarpin and 2,7,4'-trihydroxyisoflavanone as substrates, but not (-)-6a-hydroxymaackiain, daidzein, formononetin or isoliquiritigenin. This Pisum sativum (Garden pea) protein is (+)-6a-hydroxymaackiain 3-O-methyltransferase 2 (HMM2).